A 184-amino-acid chain; its full sequence is Photosystem I assembly protein Ycf4 (184 aa).

2 helical membrane-spanning segments follow: residues 19 to 39 (ISNFCWAFILFLGSLGFLLVG) and 57 to 77 (IVFFPQGIVMSFYGIAGLFIS).

The protein belongs to the Ycf4 family.

Its subcellular location is the plastid. The protein localises to the chloroplast thylakoid membrane. Its function is as follows. Seems to be required for the assembly of the photosystem I complex. In Nicotiana tomentosiformis (Tobacco), this protein is Photosystem I assembly protein Ycf4.